The following is a 311-amino-acid chain: Terpentetriene synthase (311 aa).

The DDXXD motif motif lies at 77–81; sequence DDRWD.

Belongs to the terpene synthase family. Homodimer. It depends on Mg(2+) as a cofactor.

It catalyses the reaction terpentedienyl diphosphate = terpentetriene + diphosphate. The protein operates within antibiotic biosynthesis. Involved in the production of the isoprenoid antibiotic terpentecin. Converts terpentedienol diphosphate (TDP) into terpentetriene (TTE). Can also accept geranylgeranyl diphosphate (GGDP) and farnesyl diphosphate (FDP) as substrates. This Kitasatospora griseola (Streptomyces griseolosporeus) protein is Terpentetriene synthase (cyc2).